A 123-amino-acid polypeptide reads, in one-letter code: NHL-repeat-containing protein 4 (123 aa).

2 NHL repeats span residues 35–78 (QPLG…FPRA) and 79–119 (GPPI…YQGL).

The chain is NHL-repeat-containing protein 4 (NHLRC4) from Homo sapiens (Human).